Consider the following 767-residue polypeptide: MAKRHSHYQGSRRRHARGSNSKKAGRGNAKGIQGRKIKKKPTPTNSWHNSSIPLGEGDLDDVGADFNPGRAFISPKTIEDYYFGRDAKSRSMKMGGLRPGNRYDSSTDLQAGRAAFRKRPMQFVKAKEVYDPSHNMIQKLRAKNETKNSEEIVEREADVFEEPGKMTSDVEYINNEDSENEDDDSQNSPSTDHSLSSNESKVEDGDLFFVDEEAQQSPDLTKIKRVCIEEIARPREVAIEFDPILTIGKVELSVSEGNESKEISVDVPNKGNKTYHPFAGYISNVLHGMHTSDSDNDELDYEIETENNSEPLYESSASSEVDQGFNYVGQRHNSRADNNLLPSPSPQLTEDIKCLSINGTKTFEGNNDNLSSPASEELEFGFKEEDFVINTNDIVVSNIRMGGVDNSYYLRCYRLLGDYDFHWIDQDLLTDFVVDELGLPEDRLPAYLNFIKNSLIPKIEPAEPTYSDIPISDSSDEGDSYEGDSYEDDEDMASSVVHSDIEEGLDDLIAYTLKHDTERFKTFETKSLETKGKGKKKKLLIDDALALDTETLETLQSKFSKRIETKAKKRKAKEDFIDQENRNSNDMLKKYPYGLHIQNIKDEFESFLSRNNDRLTFPPLDPHGNKTVMKIAKHYNMKSSKIGKANHTSVVVEKIKKTKWSSPNYSLIDQLMRQRPVFMRIDIRRPREEQAAFERTKTIRGKFHVKEGEIVGQNAPEIGNENIGRRMLEKLGWKSGEGLGIQGNKGISEPIFAKIKKNRSGLRHSES.

Positions 1–17 (MAKRHSHYQGSRRRHAR) are enriched in basic residues. The tract at residues 1 to 60 (MAKRHSHYQGSRRRHARGSNSKKAGRGNAKGIQGRKIKKKPTPTNSWHNSSIPLGEGDLD) is disordered. Polar residues predominate over residues 42–52 (TPTNSWHNSSI). Ser105 carries the phosphoserine modification. The span at 176–185 (EDSENEDDDS) shows a compositional bias: acidic residues. Residues 176–200 (EDSENEDDDSQNSPSTDHSLSSNES) form a disordered region. A phosphoserine mark is found at Ser217, Ser255, Ser334, Ser343, and Ser345. The disordered stretch occupies residues 466-493 (YSDIPISDSSDEGDSYEGDSYEDDEDMA). Over residues 474–492 (SSDEGDSYEGDSYEDDEDM) the composition is skewed to acidic residues. The 63-residue stretch at 594 to 656 (GLHIQNIKDE…HTSVVVEKIK (63 aa)) folds into the R3H domain. The region spanning 720–767 (NENIGRRMLEKLGWKSGEGLGIQGNKGISEPIFAKIKKNRSGLRHSES) is the G-patch domain.

The protein belongs to the SQS1 family.

It localises to the cytoplasm. Its subcellular location is the nucleus. In terms of biological role, may be involved in splicing since overexpression antagonizes the suppression of splicing defects by SPP382 mutants. The chain is Protein SQS1 (SQS1) from Saccharomyces cerevisiae (strain YJM789) (Baker's yeast).